We begin with the raw amino-acid sequence, 396 residues long: 3-hydroxykynurenine transaminase (396 aa).

Residues 43 to 44 (SN) form a binds to and confers specificity for 3-hydroxykynurenine; shared with dimeric partner region. Residues 77-79 (SAH), Ser154, and Gln204 contribute to the pyridoxal 5'-phosphate site. Ser154 is a binding site for substrate. Lys205 carries the post-translational modification N6-(pyridoxal phosphate)lysine. Residues Tyr256 and Thr259 each contribute to the pyridoxal 5'-phosphate site. Arg356 contacts substrate.

The protein belongs to the class-V pyridoxal-phosphate-dependent aminotransferase family. Homodimer. Pyridoxal 5'-phosphate serves as cofactor. As to expression, expressed in gut and ovaries.

The protein localises to the peroxisome. It carries out the reaction L-kynurenine + glyoxylate = kynurenate + glycine + H2O. It catalyses the reaction 3-hydroxy-L-kynurenine + glyoxylate = xanthurenate + glycine + H2O. The catalysed reaction is 3-hydroxy-L-kynurenine + pyruvate = xanthurenate + L-alanine + H2O. The enzyme catalyses glyoxylate + L-alanine = glycine + pyruvate. It participates in amino-acid degradation; L-kynurenine degradation; kynurenate from L-kynurenine: step 1/2. Functionally, catalyzes the pyridoxal 5'-phosphate-dependent transamination of both 3-hydroxykynurenine and L-kynurenine to xanthurenic acid and kynurenic acid, respectively, preferentially using the alpha-ketoacid glyoxylate as the amino group acceptor. Although glyoxylate is the preferred amino group acceptor, transamination of 3-hydroxykynurenine also works with pyruvate as the amino acceptor in vitro. Involved in the detoxification of cytotoxic metabolite 3-hydroxykynurenine generated by the hydroxylation of L-kynurenine, an intermediate in the tryptophan catabolism pathway. The Plasmodium parasite uses xanthurenic acid produced in the midgut to activate its gametocytes ingested during a blood meal. Also catalyzes, although with a lesser efficiency, the transamination of alanine with glyoxylate as an amino group acceptor. May play a role in the detoxification of glyoxylate, a toxic plant metabolite from the diet. The sequence is that of 3-hydroxykynurenine transaminase from Anopheles gambiae (African malaria mosquito).